A 393-amino-acid chain; its full sequence is ATP phosphoribosyltransferase regulatory subunit (393 aa).

Belongs to the class-II aminoacyl-tRNA synthetase family. HisZ subfamily. As to quaternary structure, heteromultimer composed of HisG and HisZ subunits.

The protein localises to the cytoplasm. The protein operates within amino-acid biosynthesis; L-histidine biosynthesis; L-histidine from 5-phospho-alpha-D-ribose 1-diphosphate: step 1/9. In terms of biological role, required for the first step of histidine biosynthesis. May allow the feedback regulation of ATP phosphoribosyltransferase activity by histidine. The polypeptide is ATP phosphoribosyltransferase regulatory subunit (Shouchella clausii (strain KSM-K16) (Alkalihalobacillus clausii)).